The following is a 74-amino-acid chain: Conotoxin AbVIA (74 aa).

A signal peptide spans Val-1–Ala-17. Positions Val-18 to Lys-38 are excised as a propeptide. 3 cysteine pairs are disulfide-bonded: Cys-43–Cys-57, Cys-50–Cys-61, and Cys-56–Cys-68. Ser-73 carries the serine amide modification.

It belongs to the conotoxin O1 superfamily. As to expression, expressed by the venom duct.

Its subcellular location is the secreted. The polypeptide is Conotoxin AbVIA (Conus abbreviatus (Abbreviated cone)).